The chain runs to 212 residues: uncharacterized protein (212 aa).

Residues Gly53, Glu74, and Asp97 each contribute to the S-adenosyl-L-methionine site.

It belongs to the methyltransferase superfamily. YrrT family.

Its function is as follows. Could be a S-adenosyl-L-methionine-dependent methyltransferase. This is an uncharacterized protein from Bacillus cytotoxicus (strain DSM 22905 / CIP 110041 / 391-98 / NVH 391-98).